A 229-amino-acid polypeptide reads, in one-letter code: Peptidase E (229 aa).

Catalysis depends on charge relay system residues Ser120, Asp135, and His157.

It belongs to the peptidase S51 family.

It localises to the cytoplasm. The catalysed reaction is Dipeptidase E catalyzes the hydrolysis of dipeptides Asp-|-Xaa. It does not act on peptides with N-terminal Glu, Asn or Gln, nor does it cleave isoaspartyl peptides.. In terms of biological role, hydrolyzes dipeptides containing N-terminal aspartate residues. May play a role in allowing the cell to use peptide aspartate to spare carbon otherwise required for the synthesis of the aspartate family of amino acids. In Salmonella paratyphi C (strain RKS4594), this protein is Peptidase E.